Consider the following 111-residue polypeptide: Translation initiation factor 1A 1 (111 aa).

The tract at residues 1-28 (MTLADLKKPTSRASPSTEETVTRVRTPR) is disordered. The 75-residue stretch at 22-96 (TRVRTPRREN…EKADVIWKYT (75 aa)) folds into the S1-like domain.

It belongs to the eIF-1A family.

Its function is as follows. Seems to be required for maximal rate of protein biosynthesis. Enhances ribosome dissociation into subunits and stabilizes the binding of the initiator Met-tRNA(I) to 40 S ribosomal subunits. The protein is Translation initiation factor 1A 1 (eIF1A1) of Methanosarcina mazei (strain ATCC BAA-159 / DSM 3647 / Goe1 / Go1 / JCM 11833 / OCM 88) (Methanosarcina frisia).